The following is a 198-amino-acid chain: Guanylyl cyclase-activating protein 2 (198 aa).

G2 carries the N-myristoyl glycine lipid modification. EF-hand domains lie at 16 to 51 (DVAE…QDNH), 52 to 87 (EAAE…VLRG), 88 to 123 (KLEH…IYKL), and 139 to 174 (TPEE…DKWV). Residues D65, N67, D69, T71, E76, D101, D103, N105, C107, E112, D152, N154, D156, Q158, and E163 each coordinate Ca(2+).

As to quaternary structure, undergoes dimerization at low calcium ions concentration, while the presence of calcium ions inhibits its dimerization. Dimerization correlates with its ability to activate GC. Retina and pineal gland.

Its function is as follows. Stimulates synthesis of cGMP in photoreceptors. Thought to mediate Ca(2+)-sensitive regulation of retinal guanylyl cyclase (GC), a key event in recovery of the dark state of rod photoreceptors following light exposure. This is Guanylyl cyclase-activating protein 2 (GUCA1B) from Gallus gallus (Chicken).